The chain runs to 364 residues: S-adenosylmethionine:tRNA ribosyltransferase-isomerase (364 aa).

It belongs to the QueA family. As to quaternary structure, monomer.

The protein resides in the cytoplasm. It catalyses the reaction 7-aminomethyl-7-carbaguanosine(34) in tRNA + S-adenosyl-L-methionine = epoxyqueuosine(34) in tRNA + adenine + L-methionine + 2 H(+). Its pathway is tRNA modification; tRNA-queuosine biosynthesis. In terms of biological role, transfers and isomerizes the ribose moiety from AdoMet to the 7-aminomethyl group of 7-deazaguanine (preQ1-tRNA) to give epoxyqueuosine (oQ-tRNA). The polypeptide is S-adenosylmethionine:tRNA ribosyltransferase-isomerase (Bradyrhizobium sp. (strain BTAi1 / ATCC BAA-1182)).